The primary structure comprises 119 residues: Large ribosomal subunit protein uL22 (119 aa).

It belongs to the universal ribosomal protein uL22 family. Part of the 50S ribosomal subunit.

Functionally, this protein binds specifically to 23S rRNA; its binding is stimulated by other ribosomal proteins, e.g. L4, L17, and L20. It is important during the early stages of 50S assembly. It makes multiple contacts with different domains of the 23S rRNA in the assembled 50S subunit and ribosome. The globular domain of the protein is located near the polypeptide exit tunnel on the outside of the subunit, while an extended beta-hairpin is found that lines the wall of the exit tunnel in the center of the 70S ribosome. The chain is Large ribosomal subunit protein uL22 from Rickettsia conorii (strain ATCC VR-613 / Malish 7).